Reading from the N-terminus, the 526-residue chain is tRNA modification GTPase MSS1, mitochondrial (526 aa).

A mitochondrion-targeting transit peptide spans 1–19 (MNSASFLQSRLISRSFLVR). Residues 274–444 (GIKLVLLGAP…LISTLTSNFE (171 aa)) form the TrmE-type G domain. Residues 281 to 288 (GAPNVGKS), 328 to 332 (DTAGI), and 394 to 397 (NKSD) each bind GTP.

This sequence belongs to the TRAFAC class TrmE-Era-EngA-EngB-Septin-like GTPase superfamily. TrmE GTPase family. As to quaternary structure, forms a heterodimer with MTO1.

It is found in the mitochondrion. In terms of biological role, GTPase involved in the 5-carboxymethylaminomethyl modification (mnm(5)s(2)U34) of the wobble uridine base in mitochondrial tRNAs. Involved in the expression of cytochrome c oxidase subunit 1 (COX1). Works in association with the small subunit of mitoribosomes. The chain is tRNA modification GTPase MSS1, mitochondrial (MSS1) from Saccharomyces cerevisiae (strain ATCC 204508 / S288c) (Baker's yeast).